The chain runs to 212 residues: Cytidylate kinase (212 aa).

7–15 (GPAASGKGT) contacts ATP.

The protein belongs to the cytidylate kinase family. Type 1 subfamily.

Its subcellular location is the cytoplasm. The catalysed reaction is CMP + ATP = CDP + ADP. It catalyses the reaction dCMP + ATP = dCDP + ADP. The sequence is that of Cytidylate kinase from Rhodopseudomonas palustris (strain BisB5).